We begin with the raw amino-acid sequence, 201 residues long: Holliday junction branch migration complex subunit RuvA (201 aa).

The segment at 1–64 (MYEYIRGQFQ…EDFIGLYGFT (64 aa)) is domain I. Residues 65–143 (TREELEMFKL…PDELTSEEGE (79 aa)) are domain II. A flexible linker region spans residues 144–152 (LIEGINDNS). The tract at residues 153 to 201 (DYSFNINETLSALMALGYTEKEAQKALEKVDKTLSIENMIKESLKLLMR) is domain III.

It belongs to the RuvA family. Homotetramer. Forms an RuvA(8)-RuvB(12)-Holliday junction (HJ) complex. HJ DNA is sandwiched between 2 RuvA tetramers; dsDNA enters through RuvA and exits via RuvB. An RuvB hexamer assembles on each DNA strand where it exits the tetramer. Each RuvB hexamer is contacted by two RuvA subunits (via domain III) on 2 adjacent RuvB subunits; this complex drives branch migration. In the full resolvosome a probable DNA-RuvA(4)-RuvB(12)-RuvC(2) complex forms which resolves the HJ.

The protein resides in the cytoplasm. In terms of biological role, the RuvA-RuvB-RuvC complex processes Holliday junction (HJ) DNA during genetic recombination and DNA repair, while the RuvA-RuvB complex plays an important role in the rescue of blocked DNA replication forks via replication fork reversal (RFR). RuvA specifically binds to HJ cruciform DNA, conferring on it an open structure. The RuvB hexamer acts as an ATP-dependent pump, pulling dsDNA into and through the RuvAB complex. HJ branch migration allows RuvC to scan DNA until it finds its consensus sequence, where it cleaves and resolves the cruciform DNA. This chain is Holliday junction branch migration complex subunit RuvA, found in Clostridium perfringens (strain ATCC 13124 / DSM 756 / JCM 1290 / NCIMB 6125 / NCTC 8237 / Type A).